Here is a 592-residue protein sequence, read N- to C-terminus: Inactive glycosyltransferase 25 family member 3 (592 aa).

Positions 1–19 are cleaved as a signal peptide; the sequence is MHVARLLPLLLLLGQQLRA. N72, N150, N234, and N357 each carry an N-linked (GlcNAc...) asparagine glycan. The disordered stretch occupies residues 540–592; that stretch reads AEWLSDTETSSPWDDDSGRLISQTGSQKALRGPHLHLTGSSGHSLHPHHRDEL. The short motif at 589–592 is the Prevents secretion from ER element; that stretch reads RDEL.

Belongs to the glycosyltransferase 25 family.

Its subcellular location is the endoplasmic reticulum lumen. Probable cell adhesion protein involved in leukocyte transmigration across the blood-brain barrier. Does not express any beta-galactosyltransferase activity in vitro. The chain is Inactive glycosyltransferase 25 family member 3 (Cercam) from Mus musculus (Mouse).